Here is a 432-residue protein sequence, read N- to C-terminus: Nuclear pore complex-interacting protein family member B8 (432 aa).

2 disordered regions span residues 260 to 280 (RMGR…NSLS) and 353 to 420 (SPLP…LRTR). Residues 270–280 (QQHSITDNSLS) are compositionally biased toward polar residues. Basic and acidic residues predominate over residues 374–402 (EVEKPPKPKRWRVDEVEQSPKPKRQREAE). Positions 408-420 (KPKRRRLSKLRTR) are enriched in basic residues.

The protein belongs to the NPIP family.

The polypeptide is Nuclear pore complex-interacting protein family member B8 (NPIPB8) (Homo sapiens (Human)).